An 88-amino-acid polypeptide reads, in one-letter code: Large ribosomal subunit protein bL27 (88 aa).

Positions 1–23 (MAHKKGTGSTRNGRDSNAQRLGV) are disordered. Residues 7-19 (TGSTRNGRDSNAQ) are compositionally biased toward polar residues.

It belongs to the bacterial ribosomal protein bL27 family.

The sequence is that of Large ribosomal subunit protein bL27 (rpmA) from Synechococcus elongatus (strain ATCC 33912 / PCC 7942 / FACHB-805) (Anacystis nidulans R2).